Consider the following 377-residue polypeptide: Chaperone protein DnaJ (377 aa).

The J domain occupies 4–69 (DYYEVLGVSK…EKRARYDQMG (66 aa)). The segment at 131–213 (GTEKEIQVPR…CSGKGTTRKV (83 aa)) adopts a CR-type zinc-finger fold. Residues Cys144, Cys147, Cys161, Cys164, Cys187, Cys190, Cys201, and Cys204 each contribute to the Zn(2+) site. CXXCXGXG motif repeat units follow at residues 144-151 (CTECHGSG), 161-168 (CSQCHGTG), 187-194 (CPACNGSG), and 201-208 (CKECSGKG).

This sequence belongs to the DnaJ family. In terms of assembly, homodimer. The cofactor is Zn(2+).

The protein resides in the cytoplasm. Functionally, participates actively in the response to hyperosmotic and heat shock by preventing the aggregation of stress-denatured proteins and by disaggregating proteins, also in an autonomous, DnaK-independent fashion. Unfolded proteins bind initially to DnaJ; upon interaction with the DnaJ-bound protein, DnaK hydrolyzes its bound ATP, resulting in the formation of a stable complex. GrpE releases ADP from DnaK; ATP binding to DnaK triggers the release of the substrate protein, thus completing the reaction cycle. Several rounds of ATP-dependent interactions between DnaJ, DnaK and GrpE are required for fully efficient folding. Also involved, together with DnaK and GrpE, in the DNA replication of plasmids through activation of initiation proteins. This is Chaperone protein DnaJ from Desulfitobacterium hafniense (strain DSM 10664 / DCB-2).